We begin with the raw amino-acid sequence, 269 residues long: UPF0328 protein ECU03_0020 (269 aa).

Belongs to the UPF0328 family.

The protein is UPF0328 protein ECU03_0020 of Encephalitozoon cuniculi (strain GB-M1) (Microsporidian parasite).